The following is an 88-amino-acid chain: UPF0250 protein bbp_432 (88 aa).

Belongs to the UPF0250 family.

This Buchnera aphidicola subsp. Baizongia pistaciae (strain Bp) protein is UPF0250 protein bbp_432.